The sequence spans 69 residues: Ribosome modulation factor (69 aa).

This sequence belongs to the ribosome modulation factor family.

It localises to the cytoplasm. Its function is as follows. During stationary phase, converts 70S ribosomes to an inactive dimeric form (100S ribosomes). The polypeptide is Ribosome modulation factor (Marinomonas mediterranea (strain ATCC 700492 / JCM 21426 / NBRC 103028 / MMB-1)).